The following is a 234-amino-acid chain: uncharacterized protein (234 aa).

Positions 62 to 99 (NEESISDLNSDNPGNSEPSDVESFVLSDEDENSEKDFS) are disordered. A compositionally biased stretch (polar residues) spans 67-79 (SDLNSDNPGNSEP).

This is an uncharacterized protein from Acanthamoeba polyphaga (Amoeba).